Reading from the N-terminus, the 543-residue chain is Chaperonin GroEL (543 aa).

Residues 29–32 (TLGP), 86–90 (DGTTT), glycine 413, 478–480 (NAA), and aspartate 494 each bind ATP.

This sequence belongs to the chaperonin (HSP60) family. Forms a cylinder of 14 subunits composed of two heptameric rings stacked back-to-back. Interacts with the co-chaperonin GroES.

It is found in the cytoplasm. The catalysed reaction is ATP + H2O + a folded polypeptide = ADP + phosphate + an unfolded polypeptide.. Together with its co-chaperonin GroES, plays an essential role in assisting protein folding. The GroEL-GroES system forms a nano-cage that allows encapsulation of the non-native substrate proteins and provides a physical environment optimized to promote and accelerate protein folding. This Lactobacillus johnsonii (strain CNCM I-12250 / La1 / NCC 533) protein is Chaperonin GroEL.